We begin with the raw amino-acid sequence, 340 residues long: Glycerol-3-phosphate dehydrogenase [NAD(P)+] (340 aa).

The NADPH site is built by Ser13, Trp14, and Lys108. Sn-glycerol 3-phosphate is bound by residues Lys108, Gly139, and Ser141. An NADPH-binding site is contributed by Ala143. Residues Lys194, Asp247, Ser257, Arg258, and Asn259 each coordinate sn-glycerol 3-phosphate. Lys194 functions as the Proton acceptor in the catalytic mechanism. Arg258 contributes to the NADPH binding site. 2 residues coordinate NADPH: Val282 and Glu284.

The protein belongs to the NAD-dependent glycerol-3-phosphate dehydrogenase family.

It is found in the cytoplasm. It catalyses the reaction sn-glycerol 3-phosphate + NAD(+) = dihydroxyacetone phosphate + NADH + H(+). The enzyme catalyses sn-glycerol 3-phosphate + NADP(+) = dihydroxyacetone phosphate + NADPH + H(+). The protein operates within membrane lipid metabolism; glycerophospholipid metabolism. In terms of biological role, catalyzes the reduction of the glycolytic intermediate dihydroxyacetone phosphate (DHAP) to sn-glycerol 3-phosphate (G3P), the key precursor for phospholipid synthesis. This Streptococcus thermophilus (strain ATCC BAA-491 / LMD-9) protein is Glycerol-3-phosphate dehydrogenase [NAD(P)+].